The primary structure comprises 436 residues: Suppressor of cytokine signaling 4 (436 aa).

The interval 1-25 (MAENNSKNVDVRPKTSRSRSADRKD) is disordered. Basic and acidic residues predominate over residues 9 to 25 (VDVRPKTSRSRSADRKD). Residues 283–378 (CYWGVMDKYA…FFEPLLSTPL (96 aa)) enclose the SH2 domain. The SOCS box domain occupies 373–422 (LLSTPLIRTFPFSLQHICRTVICNCTTYDGIDALPIPSPMKLYLKEYHYK).

It functions in the pathway protein modification; protein ubiquitination. In terms of biological role, SOCS family proteins form part of a classical negative feedback system that regulates cytokine signal transduction. Substrate-recognition component of a SCF-like ECS (Elongin BC-CUL2/5-SOCS-box protein) E3 ubiquitin-protein ligase complex which mediates the ubiquitination and subsequent proteasomal degradation of target proteins. Inhibits EGF signaling by mediating the degradation of the Tyr-phosphorylated EGF receptor/EGFR. This chain is Suppressor of cytokine signaling 4 (Socs4), found in Mus musculus (Mouse).